The following is a 323-amino-acid chain: o-succinylbenzoate synthase (323 aa).

Lysine 134 (proton donor) is an active-site residue. Aspartate 162, glutamate 191, and aspartate 214 together coordinate Mg(2+). Residue lysine 236 is the Proton acceptor of the active site.

Belongs to the mandelate racemase/muconate lactonizing enzyme family. MenC type 1 subfamily. It depends on a divalent metal cation as a cofactor.

It carries out the reaction (1R,6R)-6-hydroxy-2-succinyl-cyclohexa-2,4-diene-1-carboxylate = 2-succinylbenzoate + H2O. Its pathway is quinol/quinone metabolism; 1,4-dihydroxy-2-naphthoate biosynthesis; 1,4-dihydroxy-2-naphthoate from chorismate: step 4/7. It functions in the pathway quinol/quinone metabolism; menaquinone biosynthesis. Functionally, converts 2-succinyl-6-hydroxy-2,4-cyclohexadiene-1-carboxylate (SHCHC) to 2-succinylbenzoate (OSB). In Yersinia pestis bv. Antiqua (strain Antiqua), this protein is o-succinylbenzoate synthase.